Reading from the N-terminus, the 173-residue chain is Translation initiation factor IF-3 (173 aa).

The protein belongs to the IF-3 family. Monomer.

It localises to the cytoplasm. Functionally, IF-3 binds to the 30S ribosomal subunit and shifts the equilibrium between 70S ribosomes and their 50S and 30S subunits in favor of the free subunits, thus enhancing the availability of 30S subunits on which protein synthesis initiation begins. The chain is Translation initiation factor IF-3 from Aromatoleum aromaticum (strain DSM 19018 / LMG 30748 / EbN1) (Azoarcus sp. (strain EbN1)).